The sequence spans 190 residues: uncharacterized protein (190 aa).

This is an uncharacterized protein from Aquifex aeolicus (strain VF5).